We begin with the raw amino-acid sequence, 334 residues long: HTH-type transcriptional repressor PurR (334 aa).

The region spanning 2 to 56 (ATIKDVAKMAGVSTTTVSHVINKTRFVAAETEKLVLQAIQELNYSPSAVARSLKV) is the HTH lacI-type domain. The segment at residues 4-23 (IKDVAKMAGVSTTTVSHVIN) is a DNA-binding region (H-T-H motif). A DNA-binding region spans residues 48–56 (SAVARSLKV). The hypoxanthine site is built by Tyr-73, Lys-189, Thr-191, Phe-220, and Asp-274.

Homodimer.

Its pathway is purine metabolism; purine nucleotide biosynthesis [regulation]. Its function is as follows. Is the main repressor of the genes involved in the de novo synthesis of purine nucleotides, regulating purB, purC, purEK, purF, purHD, purL, purMN and guaBA expression. PurR is allosterically activated to bind its cognate DNA by binding the purine corepressors, hypoxanthine or guanine, thereby effecting transcription repression. The polypeptide is HTH-type transcriptional repressor PurR (Pasteurella multocida (strain Pm70)).